The sequence spans 391 residues: 3-ketoacyl-CoA thiolase (391 aa).

Cys95 (acyl-thioester intermediate) is an active-site residue. Catalysis depends on proton acceptor residues His347 and Cys377.

It belongs to the thiolase-like superfamily. Thiolase family. As to quaternary structure, heterotetramer of two alpha chains (FadB) and two beta chains (FadA).

Its subcellular location is the cytoplasm. The catalysed reaction is an acyl-CoA + acetyl-CoA = a 3-oxoacyl-CoA + CoA. It functions in the pathway lipid metabolism; fatty acid beta-oxidation. Its function is as follows. Catalyzes the final step of fatty acid oxidation in which acetyl-CoA is released and the CoA ester of a fatty acid two carbons shorter is formed. This Pseudomonas putida (strain ATCC 47054 / DSM 6125 / CFBP 8728 / NCIMB 11950 / KT2440) protein is 3-ketoacyl-CoA thiolase.